Reading from the N-terminus, the 250-residue chain is Coproheme decarboxylase (250 aa).

Fe-coproporphyrin III contacts are provided by residues Arg-131, 145–149 (YPMNK), His-172, and Gln-185. Tyr-145 is an active-site residue.

Belongs to the ChdC family. Type 1 subfamily. The cofactor is Fe-coproporphyrin III.

It catalyses the reaction Fe-coproporphyrin III + 2 H2O2 + 2 H(+) = heme b + 2 CO2 + 4 H2O. It carries out the reaction Fe-coproporphyrin III + H2O2 + H(+) = harderoheme III + CO2 + 2 H2O. The enzyme catalyses harderoheme III + H2O2 + H(+) = heme b + CO2 + 2 H2O. Its pathway is porphyrin-containing compound metabolism; protoheme biosynthesis. In terms of biological role, involved in coproporphyrin-dependent heme b biosynthesis. Catalyzes the decarboxylation of Fe-coproporphyrin III (coproheme) to heme b (protoheme IX), the last step of the pathway. The reaction occurs in a stepwise manner with a three-propionate intermediate. In Staphylococcus aureus (strain bovine RF122 / ET3-1), this protein is Coproheme decarboxylase.